The sequence spans 249 residues: Oxidoreductase asL5 (249 aa).

NADP(+)-binding residues include Ile-21, Lys-45, Asn-90, Tyr-155, Lys-159, Ile-188, and Thr-190. Tyr-155 acts as the Proton acceptor in catalysis. The active-site Lowers pKa of active site Tyr is the Lys-159.

The protein belongs to the short-chain dehydrogenases/reductases (SDR) family.

Functionally, oxidoreductase; part of the gene cluster that mediates the biosynthesis of xenovulene A, an unusual meroterpenoid that has potent inhibitory effects on the human gamma-aminobutyrate A (GABAA) benzodiazepine receptor. The first step of xenovulene A biosynthesis is the biosynthesis of 3-methylorcinaldehyde performed by the non-reducing polyketide synthase aspks1. The salicylate hydroxylase asL1 then catalyzes the oxidative dearomatization of 3-methylorcinaldehyde to yield a dearomatized hydroxycyclohexadione. The 2-oxoglutarate-dependent dioxygenase asL3 further catalyzes the oxidative ring expansion to provide the first tropolone metabolite. The cytochrome P450 monooxygenase asR2 allows the synthesis of tropolone hemiacetal. In parallel, a previously unrecognised class of terpene cyclase, asR6, produces alpha-humulene from farnesylpyrophosphate (FPP). The putative Diels-Alderase asR5 probably catalyzes the formation of the tropolone-humulene skeleton by linking humulene and the polyketide moiety. Oxidative-ring contractions catalyzed by asL4 and asL6 then processively remove carbon atoms from the polyketide to yield xenovulene A. The sequence is that of Oxidoreductase asL5 from Sarocladium schorii (Acremonium strictum (strain IMI 501407)).